The primary structure comprises 122 residues: UPF0102 protein VCM66_0538 (122 aa).

It belongs to the UPF0102 family.

This is UPF0102 protein VCM66_0538 from Vibrio cholerae serotype O1 (strain M66-2).